The sequence spans 130 residues: Secreted RxLR effector protein 66 (130 aa).

Residues 1 to 21 form the signal peptide; sequence MHLRLLMSTVITATLIVSNNA. The RxLR-dEER signature appears at 32-62; the sequence is RALRGASTVGIAADNLLAAHFSPTLKHKESR. Residues 104–124 form a helical membrane-spanning segment; it reads GPAIAIFAGVAATFILIDYLI.

This sequence belongs to the RxLR effector family.

The protein localises to the secreted. It is found in the host cytoplasm. Its subcellular location is the host nucleus. It localises to the membrane. In terms of biological role, effector that acts as a broad suppressor of cell death to interrupt plant immunity. Inhibits cell death induced by cell death-inducing proteins, including the PAMP elicitor INF1 from P.infestans. In Plasmopara viticola (Downy mildew of grapevine), this protein is Secreted RxLR effector protein 66.